The primary structure comprises 600 residues: Oligopeptide-binding protein OppA (600 aa).

Positions 1-22 (MNKLKVTLLASSVVLAATLLSA) are cleaved as a signal peptide. Cys23 is lipidated: N-palmitoyl cysteine. Cys23 carries the S-diacylglycerol cysteine lipid modification.

It belongs to the bacterial solute-binding protein 5 family. The complex is composed of two ATP-binding proteins (OppD and OppF), two transmembrane proteins (OppB and OppC) and a solute-binding protein (OppA).

The protein resides in the cell membrane. Functionally, part of the ABC transporter complex OppABCDF involved in the uptake of oligopeptides. This Lactococcus lactis subsp. cremoris (strain SK11) protein is Oligopeptide-binding protein OppA.